Here is a 150-residue protein sequence, read N- to C-terminus: Aspartate 1-decarboxylase 1 (150 aa).

The Schiff-base intermediate with substrate; via pyruvic acid role is filled by S24. Pyruvic acid (Ser) is present on S24. T56 is a binding site for substrate. Y57 (proton donor) is an active-site residue. Position 72-74 (72-74 (GAA)) interacts with substrate.

The protein belongs to the PanD family. In terms of assembly, heterooctamer of four alpha and four beta subunits. Pyruvate is required as a cofactor. In terms of processing, is synthesized initially as an inactive proenzyme, which is activated by self-cleavage at a specific serine bond to produce a beta-subunit with a hydroxyl group at its C-terminus and an alpha-subunit with a pyruvoyl group at its N-terminus.

The protein localises to the cytoplasm. It catalyses the reaction L-aspartate + H(+) = beta-alanine + CO2. It participates in cofactor biosynthesis; (R)-pantothenate biosynthesis; beta-alanine from L-aspartate: step 1/1. Functionally, catalyzes the pyruvoyl-dependent decarboxylation of aspartate to produce beta-alanine. In Mesorhizobium japonicum (strain LMG 29417 / CECT 9101 / MAFF 303099) (Mesorhizobium loti (strain MAFF 303099)), this protein is Aspartate 1-decarboxylase 1.